We begin with the raw amino-acid sequence, 222 residues long: Glutathione S-transferase alpha M14 (222 aa).

The residue at position 1 (Met1) is an N-acetylmethionine. Ala2 is subject to N-acetylalanine; in Glutathione S-transferase alpha M14, N-terminally processed. A GST N-terminal domain is found at 3-83; that stretch reads GKPILHYFNG…YIATKYNLYG (81 aa). N6-succinyllysine is present on Lys4. Residues Tyr9, 54–55, and 67–68 each bind glutathione; these read QV and QT. One can recognise a GST C-terminal domain in the interval 85–208; it reads DAKERALIDM…QPGSQRKPPM (124 aa). The tract at residues 199-222 is disordered; that stretch reads QPGSQRKPPMDAKKIRRSQEYFPD. The segment covering 206-222 has biased composition (basic and acidic residues); sequence PPMDAKKIRRSQEYFPD.

It belongs to the GST superfamily. Alpha family. Homodimer or heterodimer of GSTA1 and GSTA2.

It localises to the cytoplasm. The catalysed reaction is RX + glutathione = an S-substituted glutathione + a halide anion + H(+). The enzyme catalyses prostaglandin A2 + glutathione = prostaglandin A2-S-(R)-glutathione. It catalyses the reaction prostaglandin J2 + glutathione = prostaglandin J2-S-(R)-glutathione. It carries out the reaction (13S)-hydroperoxy-(9Z,11E)-octadecadienoate + 2 glutathione = (13S)-hydroxy-(9Z,11E)-octadecadienoate + glutathione disulfide + H2O. The catalysed reaction is androst-5-ene-3,17-dione = androst-4-ene-3,17-dione. Its function is as follows. Glutathione S-transferase that catalyzes the nucleophilic attack of the sulfur atom of glutathione on the electrophilic groups of a wide range of exogenous and endogenous compounds. Involved in the formation of glutathione conjugates of both prostaglandin A2 (PGA2) and prostaglandin J2 (PGJ2). It also catalyzes the isomerization of D5-androstene-3,17-dione (AD) into D4-androstene-3,17-dione and may therefore play an important role in hormone biosynthesis. Through its glutathione-dependent peroxidase activity toward the fatty acid hydroperoxide (13S)-hydroperoxy-(9Z,11E)-octadecadienoate/13-HPODE it is also involved in the metabolism of oxidized linoleic acid. The protein is Glutathione S-transferase alpha M14 of Sus scrofa (Pig).